Reading from the N-terminus, the 257-residue chain is Thiazole synthase (257 aa).

The active-site Schiff-base intermediate with DXP is the Lys96. Residues Gly157, Ala184–Gly185, and Asn206–Thr207 contribute to the 1-deoxy-D-xylulose 5-phosphate site.

This sequence belongs to the ThiG family. In terms of assembly, homotetramer. Forms heterodimers with either ThiH or ThiS.

The protein resides in the cytoplasm. The catalysed reaction is [ThiS sulfur-carrier protein]-C-terminal-Gly-aminoethanethioate + 2-iminoacetate + 1-deoxy-D-xylulose 5-phosphate = [ThiS sulfur-carrier protein]-C-terminal Gly-Gly + 2-[(2R,5Z)-2-carboxy-4-methylthiazol-5(2H)-ylidene]ethyl phosphate + 2 H2O + H(+). It functions in the pathway cofactor biosynthesis; thiamine diphosphate biosynthesis. Functionally, catalyzes the rearrangement of 1-deoxy-D-xylulose 5-phosphate (DXP) to produce the thiazole phosphate moiety of thiamine. Sulfur is provided by the thiocarboxylate moiety of the carrier protein ThiS. In vitro, sulfur can be provided by H(2)S. The polypeptide is Thiazole synthase (Rhizobium rhizogenes (strain K84 / ATCC BAA-868) (Agrobacterium radiobacter)).